The following is a 322-amino-acid chain: tRNA dimethylallyltransferase (322 aa).

Position 18-25 (G18–S25) interacts with ATP. T20–S25 contributes to the substrate binding site. 2 interaction with substrate tRNA regions span residues D43–Q46 and Q167–R171.

This sequence belongs to the IPP transferase family. In terms of assembly, monomer. Mg(2+) is required as a cofactor.

The enzyme catalyses adenosine(37) in tRNA + dimethylallyl diphosphate = N(6)-dimethylallyladenosine(37) in tRNA + diphosphate. Catalyzes the transfer of a dimethylallyl group onto the adenine at position 37 in tRNAs that read codons beginning with uridine, leading to the formation of N6-(dimethylallyl)adenosine (i(6)A). The sequence is that of tRNA dimethylallyltransferase from Chlorobium phaeobacteroides (strain BS1).